A 652-amino-acid chain; its full sequence is DNA ligase (652 aa).

NAD(+)-binding positions include 29 to 33, 78 to 79, and Glu107; these read DSEYD and SL. Lys109 (N6-AMP-lysine intermediate) is an active-site residue. NAD(+) is bound by residues Arg130, Glu164, Lys278, and Lys302. Cys395, Cys398, Cys413, and Cys418 together coordinate Zn(2+). Residues 577 to 652 enclose the BRCT domain; the sequence is VADAALSGLT…VRDEAWLESL (76 aa).

It belongs to the NAD-dependent DNA ligase family. LigA subfamily. The cofactor is Mg(2+). Mn(2+) serves as cofactor.

The catalysed reaction is NAD(+) + (deoxyribonucleotide)n-3'-hydroxyl + 5'-phospho-(deoxyribonucleotide)m = (deoxyribonucleotide)n+m + AMP + beta-nicotinamide D-nucleotide.. Functionally, DNA ligase that catalyzes the formation of phosphodiester linkages between 5'-phosphoryl and 3'-hydroxyl groups in double-stranded DNA using NAD as a coenzyme and as the energy source for the reaction. It is essential for DNA replication and repair of damaged DNA. The chain is DNA ligase from Streptococcus pneumoniae (strain 70585).